The sequence spans 493 residues: Acetylcholine receptor subunit beta (493 aa).

The N-terminal stretch at 1 to 24 (MENVRRMALGLVVMMALALSGVGA) is a signal peptide. At 25–240 (SVMEDTLLSV…VTFYLIIQRK (216 aa)) the chain is on the extracellular side. A disulfide bridge links Cys152 with Cys166. Asn165 carries N-linked (GlcNAc...) asparagine glycosylation. Helical transmembrane passes span 241–265 (PLFY…VFYL), 273–291 (MSLS…LLLA), and 307–328 (YLMF…VLNL). At 329–461 (HHRSPNTHTM…WQYVAMVADR (133 aa)) the chain is on the cytoplasmic side. Tyr379 carries the post-translational modification Phosphotyrosine; by Tyr-kinases. The helical transmembrane segment at 462–480 (LFLYVFFVICSIGTFSIFL) threads the bilayer.

The protein belongs to the ligand-gated ion channel (TC 1.A.9) family. Acetylcholine receptor (TC 1.A.9.1) subfamily. Beta-1/CHRNB1 sub-subfamily. As to quaternary structure, pentamer of two alpha chains, and one each of the beta, delta, and gamma chains.

Its subcellular location is the postsynaptic cell membrane. The protein localises to the cell membrane. It carries out the reaction K(+)(in) = K(+)(out). The catalysed reaction is Na(+)(in) = Na(+)(out). Its function is as follows. After binding acetylcholine, the AChR responds by an extensive change in conformation that affects all subunits and leads to opening of an ion-conducting channel across the plasma membrane. This Tetronarce californica (Pacific electric ray) protein is Acetylcholine receptor subunit beta (CHRNB1).